A 111-amino-acid chain; its full sequence is Probable 4-amino-4-deoxy-L-arabinose-phosphoundecaprenol flippase subunit ArnE (111 aa).

Transmembrane regions (helical) follow at residues 38–58 (LWLGLALICMGAAMVLWLLVL), 61–81 (LPVGIAYPMLSLNFVWVTLAA), and 91–111 (PRHWLGVALIISGIIILGSAA). The EamA domain occupies 40–109 (LGLALICMGA…IISGIIILGS (70 aa)).

Belongs to the ArnE family. As to quaternary structure, heterodimer of ArnE and ArnF.

It is found in the cell inner membrane. The protein operates within bacterial outer membrane biogenesis; lipopolysaccharide biosynthesis. Functionally, translocates 4-amino-4-deoxy-L-arabinose-phosphoundecaprenol (alpha-L-Ara4N-phosphoundecaprenol) from the cytoplasmic to the periplasmic side of the inner membrane. The sequence is that of Probable 4-amino-4-deoxy-L-arabinose-phosphoundecaprenol flippase subunit ArnE from Salmonella agona (strain SL483).